The primary structure comprises 99 residues: DNA-directed RNA polymerase subunit omega (99 aa).

The protein belongs to the RNA polymerase subunit omega family. In terms of assembly, the RNAP catalytic core consists of 2 alpha, 1 beta, 1 beta' and 1 omega subunit. When a sigma factor is associated with the core the holoenzyme is formed, which can initiate transcription.

It carries out the reaction RNA(n) + a ribonucleoside 5'-triphosphate = RNA(n+1) + diphosphate. Its function is as follows. Promotes RNA polymerase assembly. Latches the N- and C-terminal regions of the beta' subunit thereby facilitating its interaction with the beta and alpha subunits. The sequence is that of DNA-directed RNA polymerase subunit omega from Xanthomonas oryzae pv. oryzae (strain MAFF 311018).